The sequence spans 363 residues: Anhydro-N-acetylmuramic acid kinase (363 aa).

ATP is bound at residue 10–17 (GTSLDGMD).

This sequence belongs to the anhydro-N-acetylmuramic acid kinase family.

It carries out the reaction 1,6-anhydro-N-acetyl-beta-muramate + ATP + H2O = N-acetyl-D-muramate 6-phosphate + ADP + H(+). It participates in amino-sugar metabolism; 1,6-anhydro-N-acetylmuramate degradation. It functions in the pathway cell wall biogenesis; peptidoglycan recycling. Functionally, catalyzes the specific phosphorylation of 1,6-anhydro-N-acetylmuramic acid (anhMurNAc) with the simultaneous cleavage of the 1,6-anhydro ring, generating MurNAc-6-P. Is required for the utilization of anhMurNAc either imported from the medium or derived from its own cell wall murein, and thus plays a role in cell wall recycling. Contributes to intrinsic fosfomycin resistance in P.aeruginosa. This Pseudomonas aeruginosa (strain ATCC 15692 / DSM 22644 / CIP 104116 / JCM 14847 / LMG 12228 / 1C / PRS 101 / PAO1) protein is Anhydro-N-acetylmuramic acid kinase.